The following is a 449-amino-acid chain: Glycoprotein endo-alpha-1,2-mannosidase (449 aa).

Topologically, residues 1-8 (MIRFRRRT) are cytoplasmic. Residues 9 to 29 (CITLSIFIFLVCLIMAGLKHL) traverse the membrane as a helical; Signal-anchor for type II membrane protein segment. At 30 to 449 (RPENAAFGSP…YMKEKEHWLV (420 aa)) the chain is on the lumenal side. Residues 59 to 449 (DSENHLKGNT…YMKEKEHWLV (391 aa)) are catalytic.

Belongs to the glycosyl hydrolase 99 family.

It is found in the golgi apparatus membrane. The catalysed reaction is N-{alpha-Glc-(1-&gt;3)-alpha-Man-(1-&gt;2)-alpha-Man-(1-&gt;2)-alpha-Man-(1-&gt;3)-[alpha-Man-(1-&gt;2)-alpha-Man-(1-&gt;3)-[alpha-Man-(1-&gt;2)-alpha-Man-(1-&gt;6)]-alpha-Man-(1-&gt;6)]-beta-Man-(1-&gt;4)-beta-GlcNAc-(1-&gt;4)-beta-GlcNAc}-L-asparaginyl-[protein] + H2O = alpha-D-glucosyl-(1-&gt;3)-D-mannopyranose + N(4)-{alpha-D-Man-(1-&gt;2)-alpha-D-Man-(1-&gt;3)-[alpha-D-Man-(1-&gt;2)-alpha-D-Man-(1-&gt;3)-[alpha-D-Man-(1-&gt;2)-alpha-D-Man-(1-&gt;6)]-alpha-D-Man-(1-&gt;6)]-beta-D-Man-(1-&gt;4)-beta-D-GlaNAc-(1-&gt;4)-beta-D-GlcNAc}-L-asparaginyl-[protein] (N-glucan mannose isomer 8A1,2,3B1,2). The protein is Glycoprotein endo-alpha-1,2-mannosidase (manea) of Xenopus laevis (African clawed frog).